The following is a 558-amino-acid chain: Putative transposase for insertion sequence IS1162 (558 aa).

The HTH IS408-type domain maps to 11–93; it reads IKECLRLKFE…PDLITIHREL (83 aa). Positions 23-44 form a DNA-binding region, H-T-H motif; the sequence is LSHEKIARALQLSKGVVSKYVT. In terms of domain architecture, Integrase catalytic spans 139 to 336; the sequence is QQHRAGEKLF…HPYEVVTFKR (198 aa). Residues 486-558 are disordered; that stretch reads QGLDQQPLPK…AAGQPQPELR (73 aa).

This sequence belongs to the transposase IS21/IS408/IS1162 family.

Its function is as follows. Required for the transposition of the insertion element. The chain is Putative transposase for insertion sequence IS1162 from Pseudomonas fluorescens.